We begin with the raw amino-acid sequence, 488 residues long: Probable indole-3-acetic acid-amido synthetase GH3.6 (488 aa).

The protein belongs to the IAA-amido conjugating enzyme family. As to expression, expressed in roots and callus.

Functionally, may catalyze the synthesis of indole-3-acetic acid (IAA)-amino acid conjugates, providing a mechanism for the plant to cope with the presence of excess auxin. The sequence is that of Probable indole-3-acetic acid-amido synthetase GH3.6 (GH3.6) from Oryza sativa subsp. japonica (Rice).